The chain runs to 753 residues: Probable dipeptidyl peptidase 4 (753 aa).

An N-terminal signal peptide occupies residues Met-1–Ala-18. Asn-84, Asn-114, and Asn-222 each carry an N-linked (GlcNAc...) asparagine glycan. Active-site charge relay system residues include Ser-616, Asp-668, and His-703.

The protein belongs to the peptidase S9B family.

It localises to the secreted. It carries out the reaction Release of an N-terminal dipeptide, Xaa-Yaa-|-Zaa-, from a polypeptide, preferentially when Yaa is Pro, provided Zaa is neither Pro nor hydroxyproline.. Its function is as follows. Extracellular dipeptidyl-peptidase which removes N-terminal dipeptides sequentially from polypeptides having unsubstituted N-termini provided that the penultimate residue is proline. Contributes to pathogenicity. The polypeptide is Probable dipeptidyl peptidase 4 (DPP4) (Trichophyton verrucosum (strain HKI 0517)).